The chain runs to 379 residues: MGSADRPALRSPSLPPPPPSPPSPLLLLLPLLPLWLGLMGPGAAADGSEPATGEGRGGARSVRVDVKLPRQDALVLEGVRIGPEDGPEPLLGGRLLLMDVVDAEQEIPVDGWIAVAYVGKEQVAQFHQENQGSSQKAYPKALVQQMRRALFLGASALLLLILNHSVVRELDVSQLLLRPVIVLHYSSNVTKLLEALLQRTQATAEISSGESLSANIEWKLTLWTTCGLSKDGYGGWQDLVCLGGAQAQEQKPLQQLWNAILLVAMLLCTGLVVQAQRQASRQNQQEPGGQEDLFKRRVVRRLASLKTRRCRLSRAAHSLPEPGTETCAVCLDYFCNKQWLRVLPCKHEFHRDCVDPWLMLQQTCPLCKFNVLGNHYSDD.

Disordered regions lie at residues 1 to 21 and 44 to 63; these read MGSA…PPSP and AADG…RSVR. Topologically, residues 1–24 are cytoplasmic; the sequence is MGSADRPALRSPSLPPPPPSPPSP. A helical membrane pass occupies residues 25–45; that stretch reads LLLLLPLLPLWLGLMGPGAAA. The Extracellular segment spans residues 46–252; it reads DGSEPATGEG…GGAQAQEQKP (207 aa). A glycan (N-linked (GlcNAc...) asparagine) is linked at asparagine 188. A helical membrane pass occupies residues 253-273; the sequence is LQQLWNAILLVAMLLCTGLVV. Over 274–379 the chain is Cytoplasmic; sequence QAQRQASRQN…NVLGNHYSDD (106 aa). The RING-type; atypical zinc-finger motif lies at 327–368; sequence CAVCLDYFCNKQWLRVLPCKHEFHRDCVDPWLMLQQTCPLCK.

It is found in the membrane. The sequence is that of RING finger protein 215 (Rnf215) from Mus musculus (Mouse).